We begin with the raw amino-acid sequence, 556 residues long: Delta-1-pyrroline-5-carboxylate dehydrogenase, mitochondrial (556 aa).

The N-terminal 17 residues, 1–17 (MLRARSAVSQSWKGFKT), are a transit peptide targeting the mitochondrion. NAD(+)-binding positions include K226 and 279 to 283 (GSVPT). The Proton acceptor role is filled by E307. The Nucleophile role is filled by C341. E440 serves as a coordination point for NAD(+). S506 contributes to the substrate binding site.

Belongs to the aldehyde dehydrogenase family.

It is found in the mitochondrion matrix. The catalysed reaction is L-glutamate 5-semialdehyde + NAD(+) + H2O = L-glutamate + NADH + 2 H(+). The protein operates within amino-acid degradation; L-proline degradation into L-glutamate; L-glutamate from L-proline: step 2/2. Its function is as follows. Irreversible conversion of delta-1-pyrroline-5-carboxylate (P5C), derived either from proline or ornithine, to glutamate. This is a necessary step in the pathway interconnecting the urea and tricarboxylic acid cycles. In Danio rerio (Zebrafish), this protein is Delta-1-pyrroline-5-carboxylate dehydrogenase, mitochondrial (aldh4a1).